The chain runs to 304 residues: N-acetylmuramic acid 6-phosphate etherase (304 aa).

The 164-residue stretch at 58-221 (IVDRMKQGGR…TTASMVKMGK (164 aa)) folds into the SIS domain. E86 serves as the catalytic Proton donor. The active site involves E117.

It belongs to the GCKR-like family. MurNAc-6-P etherase subfamily. In terms of assembly, homodimer.

It carries out the reaction N-acetyl-D-muramate 6-phosphate + H2O = N-acetyl-D-glucosamine 6-phosphate + (R)-lactate. It participates in amino-sugar metabolism; N-acetylmuramate degradation. In terms of biological role, specifically catalyzes the cleavage of the D-lactyl ether substituent of MurNAc 6-phosphate, producing GlcNAc 6-phosphate and D-lactate. The chain is N-acetylmuramic acid 6-phosphate etherase from Clostridioides difficile (strain 630) (Peptoclostridium difficile).